The primary structure comprises 470 residues: Probable glycosyltransferase At3g07620 (470 aa).

The Cytoplasmic segment spans residues 1-7; sequence MRDYIPK. The helical; Signal-anchor transmembrane segment at 8 to 28 threads the bilayer; the sequence is YLNAFLLAFATFAVGFAIFIA. Residues 29–470 are Lumenal-facing; sequence KDSNSSSHLY…WLRRLNVKLL (442 aa). N-linked (GlcNAc...) asparagine glycans are attached at residues Asn-32, Asn-73, Asn-105, Asn-236, Asn-274, and Asn-299.

The protein belongs to the glycosyltransferase 47 family.

The protein localises to the golgi apparatus membrane. May be involved in cell wall biosynthesis. In Arabidopsis thaliana (Mouse-ear cress), this protein is Probable glycosyltransferase At3g07620.